The following is a 2631-amino-acid chain: Cyclic GMP-binding protein C (2631 aa).

LRR repeat units follow at residues 170 to 194, 196 to 217, 218 to 240, 242 to 262, 263 to 285, and 287 to 308; these read TAQI…IFSL, WIQK…IGKL, QQLQ…IGDL, NLKR…LERL, SKLE…IASL, and SLKT…VVSK. A Roc domain is found at 323-515; the sequence is GARPCLRSKL…QLIEDIIKTQ (193 aa). Residues 336–343, 402–406, and 458–461 each bind GTP; these read GDPGVGKT, DIANQ, and THID. The region spanning 523–741 is the COR domain; sequence PSSFFTLEEA…ESCQKRAVIL (219 aa). In terms of domain architecture, Protein kinase spans 878-1172; it reads VKINKEVGRG…KKKFAPLPFT (295 aa). Residues 884–892 and lysine 905 each bind ATP; that span reads VGRGAFGIV. The Proton acceptor role is filled by aspartate 1023. Residues 1225-1250 are compositionally biased toward polar residues; sequence ISLTSSGTSPTNSPVGGLLSQSLTQP. 2 disordered regions span residues 1225–1263 and 1387–1418; these read ISLT…ILST and SSAT…RNSV. The span at 1251–1263 shows a compositional bias: low complexity; sequence ITSGGSTSGILST. An N-terminal Ras-GEF domain is found at 1366 to 1539; the sequence is SVSIIIAATM…QIYGTLTTHE (174 aa). A compositionally biased stretch (basic and acidic residues) spans 1392–1404; it reads KSEHISTRRRSDT. The DEP domain maps to 1620–1706; sequence PLLGITVKEK…SPTSFYMFLE (87 aa). The Ras-GEF domain maps to 1708–1971; it reads DPELIARQYT…DLKALDSLQI (264 aa). Positions 1989–2013 are disordered; the sequence is GTTNDDKEKGDENGGGLTSSNFFGN. 2014-2133 contacts a nucleoside 3',5'-cyclic phosphate; that stretch reads GSDELTERDW…AKFYKIMANQ (120 aa). Disordered regions lie at residues 2142–2180, 2192–2239, and 2263–2346; these read PWSK…GGGL, MSLS…TTTD, and SANL…GQQP. A compositionally biased stretch (low complexity) spans 2144–2174; it reads SKPKNTTGGSSSSNQSAGPDNILGTTPTGIS. The span at 2212-2221 shows a compositional bias: pro residues; sequence LPSPPAPLQS. Over residues 2222-2238 the composition is skewed to low complexity; the sequence is PPTSGISSPTTTTSTTT. Over residues 2287-2299 the composition is skewed to basic and acidic residues; the sequence is TINKDPHQRDSGS. A compositionally biased stretch (polar residues) spans 2321-2336; that stretch reads GSISYLGRTQTSTSPL. In terms of domain architecture, GRAM spans 2354-2414; the sequence is EFCQRFALVD…KNIDKLICIN (61 aa). Position 2490–2616 (2490–2616) interacts with a nucleoside 3',5'-cyclic phosphate; it reads GDELTKEDWE…ASKWFKYLAT (127 aa).

This sequence belongs to the protein kinase superfamily. TKL Ser/Thr protein kinase family. ROCO subfamily.

The catalysed reaction is L-seryl-[protein] + ATP = O-phospho-L-seryl-[protein] + ADP + H(+). The enzyme catalyses L-threonyl-[protein] + ATP = O-phospho-L-threonyl-[protein] + ADP + H(+). In terms of biological role, promotes the exchange of Ras-bound GDP by GTP. Required for cyclic GMP-mediated chemotaxis, polarity. Plays a key role in cyclic AMP-induced myosin II translocation to the cortex. Also involved in the phosphorylation of mlkA and mlcR, either directly or via an intermediate kinase. The sequence is that of Cyclic GMP-binding protein C (gbpC) from Dictyostelium discoideum (Social amoeba).